Here is a 364-residue protein sequence, read N- to C-terminus: tRNA 2-selenouridine synthase (364 aa).

In terms of domain architecture, Rhodanese spans 14 to 137; sequence LIADTPIIDV…LRQTAIQATI (124 aa). Catalysis depends on Cys97, which acts as the S-selanylcysteine intermediate.

This sequence belongs to the SelU family. Monomer.

It carries out the reaction 5-methylaminomethyl-2-thiouridine(34) in tRNA + selenophosphate + (2E)-geranyl diphosphate + H2O + H(+) = 5-methylaminomethyl-2-selenouridine(34) in tRNA + (2E)-thiogeraniol + phosphate + diphosphate. The enzyme catalyses 5-methylaminomethyl-2-thiouridine(34) in tRNA + (2E)-geranyl diphosphate = 5-methylaminomethyl-S-(2E)-geranyl-thiouridine(34) in tRNA + diphosphate. It catalyses the reaction 5-methylaminomethyl-S-(2E)-geranyl-thiouridine(34) in tRNA + selenophosphate + H(+) = 5-methylaminomethyl-2-(Se-phospho)selenouridine(34) in tRNA + (2E)-thiogeraniol. The catalysed reaction is 5-methylaminomethyl-2-(Se-phospho)selenouridine(34) in tRNA + H2O = 5-methylaminomethyl-2-selenouridine(34) in tRNA + phosphate. In terms of biological role, involved in the post-transcriptional modification of the uridine at the wobble position (U34) of tRNA(Lys), tRNA(Glu) and tRNA(Gln). Catalyzes the conversion of 2-thiouridine (S2U-RNA) to 2-selenouridine (Se2U-RNA). Acts in a two-step process involving geranylation of 2-thiouridine (S2U) to S-geranyl-2-thiouridine (geS2U) and subsequent selenation of the latter derivative to 2-selenouridine (Se2U) in the tRNA chain. This chain is tRNA 2-selenouridine synthase, found in Escherichia coli O6:K15:H31 (strain 536 / UPEC).